The following is a 375-amino-acid chain: Erythronate-4-phosphate dehydrogenase (375 aa).

2 residues coordinate substrate: Ser-45 and Thr-66. Positions 146 and 175 each coordinate NAD(+). The active site involves Arg-208. Asp-232 contacts NAD(+). Glu-237 is a catalytic residue. The Proton donor role is filled by His-254. Gly-257 provides a ligand contact to NAD(+). Tyr-258 provides a ligand contact to substrate.

The protein belongs to the D-isomer specific 2-hydroxyacid dehydrogenase family. PdxB subfamily. In terms of assembly, homodimer.

The protein localises to the cytoplasm. It catalyses the reaction 4-phospho-D-erythronate + NAD(+) = (R)-3-hydroxy-2-oxo-4-phosphooxybutanoate + NADH + H(+). It functions in the pathway cofactor biosynthesis; pyridoxine 5'-phosphate biosynthesis; pyridoxine 5'-phosphate from D-erythrose 4-phosphate: step 2/5. In terms of biological role, catalyzes the oxidation of erythronate-4-phosphate to 3-hydroxy-2-oxo-4-phosphonooxybutanoate. The sequence is that of Erythronate-4-phosphate dehydrogenase from Yersinia pseudotuberculosis serotype O:1b (strain IP 31758).